We begin with the raw amino-acid sequence, 459 residues long: Argininosuccinate lyase (459 aa).

Belongs to the lyase 1 family. Argininosuccinate lyase subfamily.

It is found in the cytoplasm. The catalysed reaction is 2-(N(omega)-L-arginino)succinate = fumarate + L-arginine. It functions in the pathway amino-acid biosynthesis; L-arginine biosynthesis; L-arginine from L-ornithine and carbamoyl phosphate: step 3/3. This is Argininosuccinate lyase from Geobacillus thermodenitrificans (strain NG80-2).